The following is a 131-amino-acid chain: Large ribosomal subunit protein bL19 (131 aa).

Over residues 1 to 11 the composition is skewed to polar residues; the sequence is MEETMNNQEAP. The interval 1 to 20 is disordered; it reads MEETMNNQEAPETSEEETVA.

This sequence belongs to the bacterial ribosomal protein bL19 family.

In terms of biological role, this protein is located at the 30S-50S ribosomal subunit interface and may play a role in the structure and function of the aminoacyl-tRNA binding site. This chain is Large ribosomal subunit protein bL19, found in Dehalococcoides mccartyi (strain ATCC BAA-2100 / JCM 16839 / KCTC 5957 / BAV1).